A 221-amino-acid polypeptide reads, in one-letter code: Small ribosomal subunit protein eS8 (221 aa).

2 disordered regions span residues 1-41 and 128-169; these read MGIS…LSSN and TPAA…TLDP. Residues 8-26 show a composition bias toward basic residues; it reads MHKRRATGGKQKAWRKKRK. Positions 146–169 are enriched in basic and acidic residues; it reads EETKKSNHVTRKLEKRKEGRTLDP.

This sequence belongs to the eukaryotic ribosomal protein eS8 family.

In Zea mays (Maize), this protein is Small ribosomal subunit protein eS8 (RPS8).